The chain runs to 635 residues: Threonine--tRNA ligase (635 aa).

In terms of domain architecture, TGS spans methionine 1–threonine 61. The segment at aspartate 242–proline 533 is catalytic. Residues cysteine 333, histidine 384, and histidine 510 each coordinate Zn(2+).

Belongs to the class-II aminoacyl-tRNA synthetase family. In terms of assembly, homodimer. Zn(2+) is required as a cofactor.

The protein localises to the cytoplasm. The catalysed reaction is tRNA(Thr) + L-threonine + ATP = L-threonyl-tRNA(Thr) + AMP + diphosphate + H(+). Catalyzes the attachment of threonine to tRNA(Thr) in a two-step reaction: L-threonine is first activated by ATP to form Thr-AMP and then transferred to the acceptor end of tRNA(Thr). Also edits incorrectly charged L-seryl-tRNA(Thr). This Psychromonas ingrahamii (strain DSM 17664 / CCUG 51855 / 37) protein is Threonine--tRNA ligase.